The sequence spans 146 residues: Snake venom vascular endothelial growth factor toxin (146 aa).

A signal peptide spans 1–24 (MAAYLLAVAILFCIQGWPLGTVQG). Q25 bears the Pyrrolidone carboxylic acid mark. Disulfide bonds link C38/C80, C69/C115, and C73/C117. Residues 119–146 (PRSASGVNSRKHKRNPEEGEPRAKFPFV) form a disordered region. Positions 133 to 146 (NPEEGEPRAKFPFV) are enriched in basic and acidic residues.

It belongs to the PDGF/VEGF growth factor family. Snake venom VEGF subfamily. As to quaternary structure, homodimer; disulfide-linked. Interacts with VEGF receptor-1 (FLT1) with a high affinity, whereas it binds to VEGF receptor-2 (KDR) with a low affinity. Does not bind VEGF receptor-3 (FLT4). In terms of tissue distribution, expressed by the venom gland.

The protein localises to the secreted. In terms of biological role, snake venom VEGFs may contribute to venom dispersion and prey subjugation by inducing vascular permeability and hypotension. This protein induces vascular permeability probably through VEGF (VEGFR) signaling. This protein also induces a drastic hypotensive effect after intravenous injection. The hypotension is mediated by nitric oxide (NO), which is produced by VEGF-activated endothelium NO synthase. Also induces angiogenesis in vitro. Like other crotalid VEGFs, this protein interacts with VEGF receptor-1 (FLT1) with a high affinity, whereas it binds to VEGF receptor-2 (KDR) with a low affinity. The sequence is that of Snake venom vascular endothelial growth factor toxin from Bothrops insularis (Golden lancehead).